A 408-amino-acid chain; its full sequence is GTPase Obg (408 aa).

Residues 1–159 (MKFVDEVSIR…RDLKMEMKVL (159 aa)) form the Obg domain. The disordered stretch occupies residues 127–148 (NTRFKSSTNRAPRQTTPGKPGE). Residues 129–143 (RFKSSTNRAPRQTTP) are compositionally biased toward polar residues. Positions 160-333 (ADVGLLGLPN…LSHDLMRYLE (174 aa)) constitute an OBG-type G domain. Residues 166-173 (GLPNAGKS), 191-195 (FTTLV), 213-216 (DIPG), 283-286 (NKAD), and 314-316 (SAI) contribute to the GTP site. 2 residues coordinate Mg(2+): serine 173 and threonine 193. Residues 385 to 401 (GDDDGWDDDFEDDEDGP) are compositionally biased toward acidic residues. A disordered region spans residues 385–408 (GDDDGWDDDFEDDEDGPEIIYVRD).

The protein belongs to the TRAFAC class OBG-HflX-like GTPase superfamily. OBG GTPase family. Monomer. It depends on Mg(2+) as a cofactor.

It localises to the cytoplasm. An essential GTPase which binds GTP, GDP and possibly (p)ppGpp with moderate affinity, with high nucleotide exchange rates and a fairly low GTP hydrolysis rate. Plays a role in control of the cell cycle, stress response, ribosome biogenesis and in those bacteria that undergo differentiation, in morphogenesis control. This chain is GTPase Obg, found in Pseudomonas putida (strain ATCC 700007 / DSM 6899 / JCM 31910 / BCRC 17059 / LMG 24140 / F1).